The following is a 457-amino-acid chain: Glycine receptor subunit alpha-1 (457 aa).

Residues 1 to 28 (MYSFNTLRLYLWETIVFFSLAASKEAEA) form the signal peptide. Over 29–250 (ARSAPKPMSP…RFHLERQMGY (222 aa)) the chain is Extracellular. N-linked (GlcNAc...) asparagine glycosylation is present at Asn-66. 2 residues coordinate glycine: Arg-93 and Ser-157. The cysteines at positions 166 and 180 are disulfide-linked. Residues Glu-220 and Asp-222 each contribute to the Zn(2+) site. A disulfide bond links Cys-226 and Cys-237. 230–235 (YNTGKF) provides a ligand contact to strychnine. Glycine is bound at residue Thr-232. His-243 is a binding site for Zn(2+). A helical membrane pass occupies residues 251 to 272 (YLIQMYIPSLLIVILSWISFWI). At 273–277 (NMDAA) the chain is on the cytoplasmic side. A helical transmembrane segment spans residues 278-298 (PARVGLGITTVLTMTTQSSGS). Topologically, residues 299 to 309 (RASLPKVSYVK) are extracellular. A helical transmembrane segment spans residues 310 to 330 (AIDIWMAVCLLFVFSALLEYA). The Cytoplasmic segment spans residues 331–425 (AVNFVSRQHK…FIQRAKKIDK (95 aa)). The disordered stretch occupies residues 391–410 (KGANNSNTTNPPPAPSKSPE). The helical transmembrane segment at 426-446 (ISRIGFPMAFLIFNMFYWIIY) threads the bilayer. Topologically, residues 447–457 (KIVRREDVHNQ) are extracellular.

This sequence belongs to the ligand-gated ion channel (TC 1.A.9) family. Glycine receptor (TC 1.A.9.3) subfamily. GLRA1 sub-subfamily. As to quaternary structure, interacts with GLRB to form heteropentameric channels; this is probably the predominant form in vivo. Heteropentamer composed of four GLRA1 subunits and one GLRB subunit. Heteropentamer composed of two GLRA1 and three GLRB. Heteropentamer composed of three GLRA1 and two GLRB. Homopentamer (in vitro). Both homopentamers and heteropentamers form functional ion channels, but their characteristics are subtly different.

Its subcellular location is the postsynaptic cell membrane. The protein resides in the synapse. It localises to the perikaryon. It is found in the cell projection. The protein localises to the dendrite. Its subcellular location is the cell membrane. The enzyme catalyses chloride(in) = chloride(out). Its activity is regulated as follows. Channel opening is triggered by extracellular glycine. Channel characteristics depend on the subunit composition; heteropentameric channels are activated by lower glycine levels and display faster desensitization. Channel opening is also triggered by taurine and beta-alanine. Channel activity is potentiated by nanomolar concentrations of Zn(2+); half-maximal activation is observed with 37 nM Zn(2+). Inhibited by higher Zn(2+) levels; haf-maximal inhibition occurs at 20 uM Zn(2+). Inhibited by strychnine. Strychnine binding locks the channel in a closed conformation and prevents channel opening in response to extracellular glycine. Inhibited by lindane. Inhibited by picrotoxin. Functionally, subunit of heteromeric glycine-gated chloride channels. Plays an important role in the down-regulation of neuronal excitability. Contributes to the generation of inhibitory postsynaptic currents. Channel activity is potentiated by ethanol. Potentiation of channel activity by intoxicating levels of ethanol contribute to the sedative effects of ethanol. The chain is Glycine receptor subunit alpha-1 (GLRA1) from Homo sapiens (Human).